A 256-amino-acid chain; its full sequence is Complex I assembly factor TIMMDC1, mitochondrial (256 aa).

Positions 1 to 27 (MAQSDPPKSPDPPLPTSIRNPQTPESG) are disordered. Helical transmembrane passes span 111–131 (WGWR…GLTV) and 159–179 (VGLL…GALI).

Belongs to the Tim17/Tim22/Tim23 family. In terms of assembly, associates with the intermediate 315 kDa subcomplex of incompletely assembled complex I.

The protein localises to the mitochondrion membrane. Chaperone protein involved in the assembly of the mitochondrial NADH:ubiquinone oxidoreductase complex (complex I). Participates in constructing the membrane arm of complex I. The polypeptide is Complex I assembly factor TIMMDC1, mitochondrial (timmdc1) (Xenopus laevis (African clawed frog)).